We begin with the raw amino-acid sequence, 234 residues long: MNKGFTFKQFHINIGLCGMPVSTDGVLLGAWANIEQSKNILDIGCGTGLLSLMSAQRNENSHVDAVELMPLAAEVALQNFVQSPWKNRLHLIHQDILHYHPAHLYDAIICNPPYFNNGEQSQKGERSIARHTDSLPFDKLLKCCKALMSSKGRASFILPFIEGNQFIEIAKKHSFHLTKLTKIQTTEKKDVSRLLIELSIFPYIYQETTLIIHSKDGYSNDFIQLTRHFYLNMA.

The protein belongs to the methyltransferase superfamily. tRNA (adenine-N(6)-)-methyltransferase family.

The protein localises to the cytoplasm. The catalysed reaction is adenosine(37) in tRNA1(Val) + S-adenosyl-L-methionine = N(6)-methyladenosine(37) in tRNA1(Val) + S-adenosyl-L-homocysteine + H(+). Its function is as follows. Specifically methylates the adenine in position 37 of tRNA(1)(Val) (anticodon cmo5UAC). The sequence is that of tRNA1(Val) (adenine(37)-N6)-methyltransferase from Aliivibrio salmonicida (strain LFI1238) (Vibrio salmonicida (strain LFI1238)).